The sequence spans 398 residues: MERFKLNTTLSYLVAVSGGPDSMFMLNELIKMNIKEIVVCHVNYNFREDSWKDQKLVEDFCLKNNLKLEKLIINQDYSKLKENFESWARNIRYDFFVEISKKYNIQNVLIAHNRNDLVETFLLQQDRKGYVKHYGLNKTSTYKEITIVRPMLNILKSEILKSLKEENIAFVIDSTNEDKKYKRNKIRANLSESTFNDFEETIKKLNKKLEIINLEVNWYVNNNMSADELKINKNLQDQDLEFIQRTIYKWLEVIKKDFVIQNRRNKTIFEIAKNIKVSEKVFWEINIGEYSIIKDYENLFIIETKAIQPKTILIKSKEDLYLSEEFINWLDLLNAIKRNKENYPYVITNDFLTYKLNTYTFGKKTNRYLIDKKIRYKNRMLKAVVYSTKTKKILNTIK.

17–22 provides a ligand contact to ATP; the sequence is SGGPDS.

It belongs to the tRNA(Ile)-lysidine synthase family.

The protein resides in the cytoplasm. The enzyme catalyses cytidine(34) in tRNA(Ile2) + L-lysine + ATP = lysidine(34) in tRNA(Ile2) + AMP + diphosphate + H(+). Functionally, ligates lysine onto the cytidine present at position 34 of the AUA codon-specific tRNA(Ile) that contains the anticodon CAU, in an ATP-dependent manner. Cytidine is converted to lysidine, thus changing the amino acid specificity of the tRNA from methionine to isoleucine. The protein is tRNA(Ile)-lysidine synthase of Mesoplasma florum (strain ATCC 33453 / NBRC 100688 / NCTC 11704 / L1) (Acholeplasma florum).